Here is a 94-residue protein sequence, read N- to C-terminus: Co-chaperonin GroES (94 aa).

It belongs to the GroES chaperonin family. As to quaternary structure, heptamer of 7 subunits arranged in a ring. Interacts with the chaperonin GroEL.

It is found in the cytoplasm. Its function is as follows. Together with the chaperonin GroEL, plays an essential role in assisting protein folding. The GroEL-GroES system forms a nano-cage that allows encapsulation of the non-native substrate proteins and provides a physical environment optimized to promote and accelerate protein folding. GroES binds to the apical surface of the GroEL ring, thereby capping the opening of the GroEL channel. In Thermoanaerobacter pseudethanolicus (strain ATCC 33223 / 39E) (Clostridium thermohydrosulfuricum), this protein is Co-chaperonin GroES.